Reading from the N-terminus, the 155-residue chain is uncharacterized protein (155 aa).

This is an uncharacterized protein from Saccharomyces cerevisiae (strain ATCC 204508 / S288c) (Baker's yeast).